The chain runs to 275 residues: NH(3)-dependent NAD(+) synthetase (275 aa).

46–53 (GISGGQDS) provides a ligand contact to ATP. Asp-52 is a Mg(2+) binding site. Arg-140 contributes to the deamido-NAD(+) binding site. Residue Thr-160 coordinates ATP. Residue Glu-165 participates in Mg(2+) binding. Lys-173 and Asp-180 together coordinate deamido-NAD(+). ATP is bound by residues Lys-189 and Thr-211. 260-261 (HK) provides a ligand contact to deamido-NAD(+).

It belongs to the NAD synthetase family. Homodimer.

The catalysed reaction is deamido-NAD(+) + NH4(+) + ATP = AMP + diphosphate + NAD(+) + H(+). It participates in cofactor biosynthesis; NAD(+) biosynthesis; NAD(+) from deamido-NAD(+) (ammonia route): step 1/1. Catalyzes the ATP-dependent amidation of deamido-NAD to form NAD. Uses ammonia as a nitrogen source. This Erwinia tasmaniensis (strain DSM 17950 / CFBP 7177 / CIP 109463 / NCPPB 4357 / Et1/99) protein is NH(3)-dependent NAD(+) synthetase.